Reading from the N-terminus, the 295-residue chain is Multistep phosphorelay regulator 1 (295 aa).

Positions 89–110 are disordered; that stretch reads KSENNQQLAANETAGAPEGTEE. A compositionally biased stretch (low complexity) spans 97–106; the sequence is AANETAGAPE. An HPt domain is found at 182-284; it reads EHEFSKSIVW…NDFYKDARAY (103 aa). At H221 the chain carries Phosphohistidine.

Functionally, binds to the msc4 response regulator which is part of a multistep phosphorelay system that transmits oxidative stress signals to the spc1 MAPK cascade. In Schizosaccharomyces pombe (strain 972 / ATCC 24843) (Fission yeast), this protein is Multistep phosphorelay regulator 1 (mpr1).